Reading from the N-terminus, the 938-residue chain is AP-4 complex subunit epsilon (938 aa).

10 HEAT repeats span residues 118–153 (DLIILIVNTIQKDLRSDNYLVVCAALNAICRLINEE), 154–190 (TIPAVLPQVVELLNHQKEAVRKKAIMALHRFHRKSPS), 192–227 (VSHLVSNFRKRLCDNDPGVMGATLCPLFDLISEDVN), 234–272 (SSFVSILKQVTERRLPKSYDYHQMPAPFIQIKLLKIMAL), 321–358 (KLLEAAADAISKFLKSDSHNLKYMGIDGLGRLIKISPD), 359–395 (IAEQHQLAVIDCLEDPDDTLKRKTFELLYKMTKSSNV), 397–431 (VIVDRMIDYMISINDNHYKTEIASRCVELAEQFAP), 454–495 (KVAH…EPKL), 517–556 (YSASYISGKLCDVADAYSSDETVKGYAVSALMKIYAFEIA), and 562–601 (DVLPECQSLIEELLASHSTDLQQRAYELQALLALDARAVE). 4 disordered regions span residues 690-712 (EPSYYSESHQPISTSLVSERESS), 725-867 (WGRP…VMGL), 880-912 (VDSLLSELSDSSKGNSRTYQPQTSKGPNTKEAL), and 919-938 (RQMGVNPTSQNPTLFKDLLG). Positions 694-706 (YSESHQPISTSLV) are enriched in polar residues. Over residues 728–744 (PSYQSTTAASSTTPQAA) the composition is skewed to low complexity. Residues 764–779 (SSYEPKKPEIDPEKQR) show a composition bias toward basic and acidic residues. Residues 808–821 (ANKTATVPKENQTP) are compositionally biased toward polar residues. 2 stretches are compositionally biased toward low complexity: residues 853 to 863 (DSSSQDGGSSD) and 880 to 891 (VDSLLSELSDSS). The HEAT 11 repeat unit spans residues 874–911 (VTTTTSVDSLLSELSDSSKGNSRTYQPQTSKGPNTKEA). Polar residues predominate over residues 892–906 (KGNSRTYQPQTSKGP).

The protein belongs to the adaptor complexes large subunit family. In terms of assembly, adaptor protein complex 4 (AP-4) is a heterotetramer composed of two large adaptins (epsilon-type subunit and beta-type subunit), a medium adaptin (mu-type subunit) and a small adaptin (sigma-type subunit).

It localises to the golgi apparatus. Its subcellular location is the trans-Golgi network. The protein localises to the membrane. It is found in the coated pit. Subunit of novel type of clathrin- or non-clathrin-associated protein coat involved in targeting proteins from the trans-Golgi network (TGN) to the endosomal-lysosomal system. The sequence is that of AP-4 complex subunit epsilon from Arabidopsis thaliana (Mouse-ear cress).